The sequence spans 140 residues: MSTIRCDIVSAEKEIFHGEATLVVATGELGELGIAPKHAPLITRLKPGKVVVTTANGEHLDFAISGGILEVQPQVVTILVDTAVRAQDIEEAAVRKVKEEAERLLANRGNTVDVAEAQRRLTEATVQLQALERLRRNLKH.

This sequence belongs to the ATPase epsilon chain family. F-type ATPases have 2 components, CF(1) - the catalytic core - and CF(0) - the membrane proton channel. CF(1) has five subunits: alpha(3), beta(3), gamma(1), delta(1), epsilon(1). CF(0) has three main subunits: a, b and c.

It localises to the cell inner membrane. Produces ATP from ADP in the presence of a proton gradient across the membrane. This Xanthomonas oryzae pv. oryzae (strain MAFF 311018) protein is ATP synthase epsilon chain.